Reading from the N-terminus, the 543-residue chain is Probable protein kinase UbiB (543 aa).

The 379-residue stretch at 123-501 (DFDQQALASA…RVRQGQSRYL (379 aa)) folds into the Protein kinase domain. ATP contacts are provided by residues 129 to 137 (LASASIAQV) and K152. The active-site Proton acceptor is the D287. Helical transmembrane passes span 498–518 (SRYLFGVGATLLVSGTILLSG) and 519–539 (DVEVFPAWLIAAGIVSWVIGW).

The protein belongs to the ABC1 family. UbiB subfamily.

It localises to the cell inner membrane. The protein operates within cofactor biosynthesis; ubiquinone biosynthesis [regulation]. Is probably a protein kinase regulator of UbiI activity which is involved in aerobic coenzyme Q (ubiquinone) biosynthesis. This is Probable protein kinase UbiB from Serratia proteamaculans (strain 568).